The following is a 377-amino-acid chain: Actin-related protein T2 (377 aa).

The protein belongs to the actin family.

It localises to the cytoplasm. The protein resides in the cytoskeleton. The protein is Actin-related protein T2 (ACTRT2) of Bos taurus (Bovine).